Consider the following 865-residue polypeptide: MGSIDTVGMGQRAIDQIISELSLNEKVALLSGVDAWHTFAIPRLGIPSIRTTDGPNGARGTRYFNGVPSACLPCGTALGATFDRDLIFSLGQLLAAECRAKGAHVLLGPTINIQRGPLGGRGFESFSEDPVLSGLAAASYCSGVQDGGVVPTLKHLVCNDQEHERVAVSALVTPRALREIYLLPFQLAIQGARPGAVMTSYNKVNGLHASENPGLIRDILRGEWGYEGAVISDWFGTYSVADAVNAGLDLEMPGPTRFRGPALMHALTSNKVSEKTLNERVRKVLELVQLASRAGVPEYAPERKLNRPEDRALLRRAAGESVVLLKNDKNDSTNSPILPLDREKTTLVIGPNADLAAYCGGGSASLLAYYTVTPRQGIADKCGAEQVVFSQGCYGHKELPLLGEHLRTIETGQPGYTFRVYTEPPPASGSFKGSDSRTPVDELHMTNSSAFLMDYSHPQISGDTYYATLEGTFEPPESGVYEFGLTVAGTGLLYIDGVLVVDNKTVQRAGTSFFGIGTVEERGERYLEAGKKHHVFVEFGTAPTSNLQHHHGVVSFGPGGLRLGGCRKLDTDTAIQQAVQSAAQADQVVVCVGLSGDWESEGFDRPHMDLPPGTDELVNAVLAVQPNAVIVVQSGTPVTMPWADKAKALLQAWYGGNEAGNGIADVLFGDVNPSAKLPLTFPRELAQNPSYLSYRSERGRVLYSEDIYVGYRYYDTTGQPPLFRFGHGLSYSTFHLRDLTVRETAPYAANIKESSLRVSVTVSNTSARPGAEVVLVYVRPPAAACSVGRPVRELKGYEKVMLQPGETREVSITIPLGLATSFWDEGCDAWLSEKGLYFVEAVGTGEGNTLVAPLTVQVSRVWNGL.

The active site involves Asp233. N-linked (GlcNAc...) asparagine glycosylation is found at Asn330, Asn447, Asn503, and Asn764. One can recognise a PA14 domain in the interval 411–579 (TGQPGYTFRV…DTDTAIQQAV (169 aa)).

Belongs to the glycosyl hydrolase 3 family.

It is found in the secreted. The catalysed reaction is Hydrolysis of terminal, non-reducing beta-D-glucosyl residues with release of beta-D-glucose.. It functions in the pathway glycan metabolism; cellulose degradation. Its function is as follows. Beta-glucosidases are one of a number of cellulolytic enzymes involved in the degradation of cellulosic biomass. Catalyzes the last step releasing glucose from the inhibitory cellobiose. This chain is Probable beta-glucosidase J (bglJ), found in Aspergillus fumigatus (strain ATCC MYA-4609 / CBS 101355 / FGSC A1100 / Af293) (Neosartorya fumigata).